Consider the following 249-residue polypeptide: Phycobilisome 27.9 kDa linker polypeptide, phycoerythrin-associated, rod (249 aa).

Residues 2 to 166 (ASQTILELWP…LDRGPAQIDS (165 aa)) form the PBS-linker domain. A CpcD-like domain is found at 198–248 (EKRFKILVQGSKFDSPRRISTTEYIVPASKMTPQIQRINRTSGKIVSITEI).

The protein belongs to the phycobilisome linker protein family. As to quaternary structure, the phycobilisome is a hemidiscoidal structure that is composed of two distinct substructures: a core complex and six rods radiating from the core.

The protein resides in the cellular thylakoid membrane. In terms of biological role, rod linker protein, associated with phycoerythrin. Linker polypeptides determine the state of aggregation and the location of the disk-shaped phycobiliprotein units within the phycobilisome and modulate their spectroscopic properties in order to mediate a directed and optimal energy transfer. This is Phycobilisome 27.9 kDa linker polypeptide, phycoerythrin-associated, rod (cpeD) from Microchaete diplosiphon (Fremyella diplosiphon).